An 868-amino-acid chain; its full sequence is Probable beta-glucosidase F (868 aa).

The N-terminal stretch at 1–20 (MAHRWLILALVAAAAPRALA) is a signal peptide. The tract at residues 21 to 40 (SPGPSLNERQSDDEPFSPPY) is disordered. N-linked (GlcNAc...) asparagine glycosylation is found at N65, N73, and N257. D285 is an active-site residue. Residues N328, N360, N395, N421, and N726 are each glycosylated (N-linked (GlcNAc...) asparagine). The interval 731-752 (YPYPDGYSTDPQPPPRAGGAEG) is disordered.

The protein belongs to the glycosyl hydrolase 3 family.

It localises to the secreted. It catalyses the reaction Hydrolysis of terminal, non-reducing beta-D-glucosyl residues with release of beta-D-glucose.. It participates in glycan metabolism; cellulose degradation. Beta-glucosidases are one of a number of cellulolytic enzymes involved in the degradation of cellulosic biomass. Catalyzes the last step releasing glucose from the inhibitory cellobiose. This Emericella nidulans (strain FGSC A4 / ATCC 38163 / CBS 112.46 / NRRL 194 / M139) (Aspergillus nidulans) protein is Probable beta-glucosidase F (bglF).